The sequence spans 303 residues: N-acetyl-D-glucosamine kinase (303 aa).

ATP contacts are provided by residues 4-11 and 133-140; these read GFDVGGTK and GFGGGLIY. Zn(2+)-binding residues include His157, Cys177, Cys179, and Cys184.

This sequence belongs to the ROK (NagC/XylR) family. NagK subfamily.

The catalysed reaction is N-acetyl-D-glucosamine + ATP = N-acetyl-D-glucosamine 6-phosphate + ADP + H(+). It functions in the pathway cell wall biogenesis; peptidoglycan recycling. Catalyzes the phosphorylation of N-acetyl-D-glucosamine (GlcNAc) derived from cell-wall degradation, yielding GlcNAc-6-P. This Vibrio vulnificus (strain CMCP6) protein is N-acetyl-D-glucosamine kinase.